The sequence spans 74 residues: Cecropin-P2 (74 aa).

The first 13 residues, 1 to 13, serve as a signal peptide directing secretion; sequence MIFIYLLVQTAES. Residues 45 to 74 constitute a propeptide, removed in mature form; the sequence is RRRFVVQQDTISPRLEVDERFLPNSVQEQI.

This sequence belongs to the cecropin family. Expressed in the body wall, intestine, uterus and ovary.

Its subcellular location is the secreted. Functionally, has antibacterial activity against several Gram-positive and Gram-negative bacteria. Is weakly active against yeasts. Acts by a nonpore mechanism. The sequence is that of Cecropin-P2 (ASCEC-2) from Ascaris suum (Pig roundworm).